A 424-amino-acid chain; its full sequence is Serine/threonine-protein kinase H1 (424 aa).

The N-myristoyl glycine moiety is linked to residue glycine 2. Cysteine 3 carries S-palmitoyl cysteine lipidation. A disordered region spans residues 59–79; it reads APPCPGVPNTGHTAPPSEPPR. The Protein kinase domain maps to 98–355; that stretch reads YDIKALIGRG…ALQALRHPWV (258 aa). Residues 104 to 112 and lysine 127 contribute to the ATP site; that span reads IGRGSFSRV. Aspartate 218 acts as the Proton acceptor in catalysis. A disordered region spans residues 378-408; the sequence is RASSRCQSTKSSQSTRSSRSTRSNKSRRVRE. Serine 380 and serine 381 each carry phosphoserine; by autocatalysis. Low complexity predominate over residues 381–398; the sequence is SRCQSTKSSQSTRSSRST.

It belongs to the protein kinase superfamily. CAMK Ser/Thr protein kinase family. As to quaternary structure, homodimer. In terms of processing, autophosphorylated on serine residues. Myristoylated. Required for membrane association. Prerequisite for palmitoylation to occur. Post-translationally, palmitoylated.

The protein localises to the golgi apparatus. It localises to the cytoplasm. It is found in the cytoskeleton. The protein resides in the microtubule organizing center. Its subcellular location is the centrosome. The protein localises to the nucleus speckle. It localises to the endoplasmic reticulum membrane. It is found in the cell membrane. It carries out the reaction L-seryl-[protein] + ATP = O-phospho-L-seryl-[protein] + ADP + H(+). The enzyme catalyses L-threonyl-[protein] + ATP = O-phospho-L-threonyl-[protein] + ADP + H(+). With respect to regulation, activity depends on Ca(2+) concentration. Serine/threonine protein kinase that may be involved in the regulation of pre-mRNA processing. It may phosphorylate components of nuclear splice factor compartments (SFC), such as non-snRNP splicing factors containing a serine/arginine-rich domain (SR proteins). Reversible phosphorylation of SR proteins may cause their release into the nucleoplasm and change their local concentration, thereby influencing alternative splicing. This Mus musculus (Mouse) protein is Serine/threonine-protein kinase H1 (Pskh1).